Reading from the N-terminus, the 237-residue chain is Ribonuclease PH (237 aa).

Phosphate-binding positions include R86 and 124–126 (GTR).

It belongs to the RNase PH family. As to quaternary structure, homohexameric ring arranged as a trimer of dimers.

The enzyme catalyses tRNA(n+1) + phosphate = tRNA(n) + a ribonucleoside 5'-diphosphate. Its function is as follows. Phosphorolytic 3'-5' exoribonuclease that plays an important role in tRNA 3'-end maturation. Removes nucleotide residues following the 3'-CCA terminus of tRNAs; can also add nucleotides to the ends of RNA molecules by using nucleoside diphosphates as substrates, but this may not be physiologically important. Probably plays a role in initiation of 16S rRNA degradation (leading to ribosome degradation) during starvation. This is Ribonuclease PH from Methylobacterium nodulans (strain LMG 21967 / CNCM I-2342 / ORS 2060).